The primary structure comprises 1490 residues: DNA-directed RNA polymerase subunit beta' (1490 aa).

Positions 67, 69, 82, and 85 each coordinate Zn(2+). Asp499, Asp501, and Asp503 together coordinate Mg(2+). Cys868, Cys944, Cys951, and Cys954 together coordinate Zn(2+).

The protein belongs to the RNA polymerase beta' chain family. In terms of assembly, the RNAP catalytic core consists of 2 alpha, 1 beta, 1 beta' and 1 omega subunit. When a sigma factor is associated with the core the holoenzyme is formed, which can initiate transcription. The cofactor is Mg(2+). Requires Zn(2+) as cofactor.

The catalysed reaction is RNA(n) + a ribonucleoside 5'-triphosphate = RNA(n+1) + diphosphate. In terms of biological role, DNA-dependent RNA polymerase catalyzes the transcription of DNA into RNA using the four ribonucleoside triphosphates as substrates. The chain is DNA-directed RNA polymerase subunit beta' from Chlorobaculum tepidum (strain ATCC 49652 / DSM 12025 / NBRC 103806 / TLS) (Chlorobium tepidum).